Reading from the N-terminus, the 388-residue chain is GTPase Obg (388 aa).

Residues M1 to L159 form the Obg domain. Residues A160–Q333 form the OBG-type G domain. Residues G166–S173, F191–V195, D213–G216, N283–D286, and S314–Y316 each bind GTP. S173 and T193 together coordinate Mg(2+).

The protein belongs to the TRAFAC class OBG-HflX-like GTPase superfamily. OBG GTPase family. Monomer. The cofactor is Mg(2+).

It localises to the cytoplasm. Functionally, an essential GTPase which binds GTP, GDP and possibly (p)ppGpp with moderate affinity, with high nucleotide exchange rates and a fairly low GTP hydrolysis rate. Plays a role in control of the cell cycle, stress response, ribosome biogenesis and in those bacteria that undergo differentiation, in morphogenesis control. The chain is GTPase Obg from Shewanella sp. (strain MR-4).